Consider the following 221-residue polypeptide: PKHD-type hydroxylase P9515_13321 (221 aa).

In terms of domain architecture, Fe2OG dioxygenase spans 80-174; the sequence is TIHGIMFTKS…RLVCVGWIES (95 aa). Positions 98, 100, and 155 each coordinate Fe cation. Position 165 (R165) interacts with 2-oxoglutarate.

Fe(2+) serves as cofactor. The cofactor is L-ascorbate.

In Prochlorococcus marinus (strain MIT 9515), this protein is PKHD-type hydroxylase P9515_13321.